The sequence spans 427 residues: Adenylosuccinate synthetase (427 aa).

GTP contacts are provided by residues 13-19 (GDEGKGK) and 41-43 (GHT). Asp14 functions as the Proton acceptor in the catalytic mechanism. Mg(2+) contacts are provided by Asp14 and Gly41. IMP-binding positions include 14 to 17 (DEGK), 39 to 42 (NAGH), Thr129, Arg143, Gln224, Thr239, and Arg303. His42 acts as the Proton donor in catalysis. The disordered stretch occupies residues 117–137 (QEKQRGEESLGTTKRGIGPAY). 299–305 (TTTGRPR) serves as a coordination point for substrate. GTP is bound by residues Arg305, 331–333 (KLD), and 414–416 (GTG).

The protein belongs to the adenylosuccinate synthetase family. In terms of assembly, homodimer. The cofactor is Mg(2+).

The protein resides in the cytoplasm. It catalyses the reaction IMP + L-aspartate + GTP = N(6)-(1,2-dicarboxyethyl)-AMP + GDP + phosphate + 2 H(+). It functions in the pathway purine metabolism; AMP biosynthesis via de novo pathway; AMP from IMP: step 1/2. In terms of biological role, plays an important role in the de novo pathway of purine nucleotide biosynthesis. Catalyzes the first committed step in the biosynthesis of AMP from IMP. This is Adenylosuccinate synthetase from Caldicellulosiruptor saccharolyticus (strain ATCC 43494 / DSM 8903 / Tp8T 6331).